The following is a 907-amino-acid chain: Aldehyde oxidoreductase (907 aa).

The 78-residue stretch at 2–79 (IQKVITVNGI…GAQITTIEGV (78 aa)) folds into the 2Fe-2S ferredoxin-type domain. [2Fe-2S] cluster-binding residues include Cys40, Cys45, Cys48, Cys60, Cys100, Cys103, Cys137, and Cys139. Mo-molybdopterin cytosine dinucleotide-binding residues include His653 and Glu869.

The protein belongs to the xanthine dehydrogenase family. In terms of assembly, homodimer. It depends on Mo-molybdopterin cytosine dinucleotide as a cofactor. [2Fe-2S] cluster serves as cofactor.

The enzyme catalyses an aldehyde + A + H2O = a carboxylate + AH2 + H(+). The protein is Aldehyde oxidoreductase (mop) of Megalodesulfovibrio gigas (Desulfovibrio gigas).